Consider the following 212-residue polypeptide: FMN-dependent NADH:quinone oxidoreductase (212 aa).

FMN is bound by residues Ser-10 and 17–19 (SFS).

It belongs to the azoreductase type 1 family. As to quaternary structure, homodimer. FMN serves as cofactor.

It catalyses the reaction 2 a quinone + NADH + H(+) = 2 a 1,4-benzosemiquinone + NAD(+). It carries out the reaction N,N-dimethyl-1,4-phenylenediamine + anthranilate + 2 NAD(+) = 2-(4-dimethylaminophenyl)diazenylbenzoate + 2 NADH + 2 H(+). Quinone reductase that provides resistance to thiol-specific stress caused by electrophilic quinones. In terms of biological role, also exhibits azoreductase activity. Catalyzes the reductive cleavage of the azo bond in aromatic azo compounds to the corresponding amines. This chain is FMN-dependent NADH:quinone oxidoreductase, found in Malacoplasma penetrans (strain HF-2) (Mycoplasma penetrans).